We begin with the raw amino-acid sequence, 237 residues long: Nodulation protein NolA (237 aa).

In terms of domain architecture, HTH merR-type spans 10–79; sequence RWRIGELAEA…LVEIRKAMEG (70 aa). The segment at residues 13-32 is a DNA-binding region (H-T-H motif); the sequence is IGELAEATGVTVRTLHHYEH.

Its function is as follows. Involved in genotype-specific nodulation of soybeans. The protein is Nodulation protein NolA (nolA) of Bradyrhizobium diazoefficiens (strain JCM 10833 / BCRC 13528 / IAM 13628 / NBRC 14792 / USDA 110).